Reading from the N-terminus, the 442-residue chain is Protein phosphatase 2C 3 (442 aa).

The segment at 30–100 (RFRMSPSEMN…VSISDGNSSV (71 aa)) is disordered. The segment covering 79–90 (PEEESVSLEDSD) has biased composition (acidic residues). One can recognise a PPM-type phosphatase domain in the interval 120–433 (RYGVASVCGR…DNVSVVVIDL (314 aa)). Residues D162, G163, and D339 each coordinate Mn(2+). A disordered region spans residues 363–401 (GRGRRRGETQTPGRRSEEEGKEEEEKVVGSRKNGKRGEI). A compositionally biased stretch (basic and acidic residues) spans 376 to 390 (RRSEEEGKEEEEKVV). Position 424 (D424) interacts with Mn(2+).

This sequence belongs to the PP2C family. In terms of assembly, part of a K(+)-channel calcium-sensing kinase/phosphatase complex composed by a calcium sensor CBL (CBL1, CBL2, CBL3 or CBL9), a kinase CIPK (CIPK6, CIPK16 or CIPK23), a phosphatase PP2C (AIP1) and a K(+)-channel (AKT1). Interacts with AKT1 and CIPK23. Interacts with PYL8/RCAR3 in an abscisic acid-independent. Interacts with PYR1/RCAR11 in an abscisic acid-dependent manner. It depends on Mg(2+) as a cofactor. Mn(2+) is required as a cofactor. Expressed in shoot meristem, vascular tissues of cotyledons, and in primary roots surrounding the root meristem. Highly expressed in seeds.

It localises to the cell membrane. Its subcellular location is the cytoplasm. The protein resides in the nucleus. The enzyme catalyses O-phospho-L-seryl-[protein] + H2O = L-seryl-[protein] + phosphate. The catalysed reaction is O-phospho-L-threonyl-[protein] + H2O = L-threonyl-[protein] + phosphate. In terms of biological role, involved in the negative regulation of the K(+) potassium channel AKT1 by its dephosphorylation, antagonistically to CIPK proteins (e.g. CIPK23). Functions as a positive regulator of abscisic acid-mediated cell signaling during seedling growth. Involved in the regulation of seed dormancy. Acts as a negative regulator of seed dormancy by inhibiting abscisic signaling and subsequently activating gibberellic acid signaling. The chain is Protein phosphatase 2C 3 from Arabidopsis thaliana (Mouse-ear cress).